The sequence spans 184 residues: ATP synthase subunit delta (184 aa).

The protein belongs to the ATPase delta chain family. F-type ATPases have 2 components, F(1) - the catalytic core - and F(0) - the membrane proton channel. F(1) has five subunits: alpha(3), beta(3), gamma(1), delta(1), epsilon(1). F(0) has three main subunits: a(1), b(2) and c(10-14). The alpha and beta chains form an alternating ring which encloses part of the gamma chain. F(1) is attached to F(0) by a central stalk formed by the gamma and epsilon chains, while a peripheral stalk is formed by the delta and b chains.

The protein resides in the cell inner membrane. In terms of biological role, f(1)F(0) ATP synthase produces ATP from ADP in the presence of a proton or sodium gradient. F-type ATPases consist of two structural domains, F(1) containing the extramembraneous catalytic core and F(0) containing the membrane proton channel, linked together by a central stalk and a peripheral stalk. During catalysis, ATP synthesis in the catalytic domain of F(1) is coupled via a rotary mechanism of the central stalk subunits to proton translocation. Functionally, this protein is part of the stalk that links CF(0) to CF(1). It either transmits conformational changes from CF(0) to CF(1) or is implicated in proton conduction. The polypeptide is ATP synthase subunit delta (Rickettsia canadensis (strain McKiel)).